Reading from the N-terminus, the 93-residue chain is Alpha-defensin 26 (93 aa).

An N-terminal signal peptide occupies residues 1 to 19; that stretch reads MKTLVLLSALFLLAFQVQA. A propeptide spanning residues 20 to 58 is cleaved from the precursor; the sequence is DPIQNTDEETNTEVQPQEEDQAVSVSFGNPEGSDLQEES. A disordered region spans residues 24 to 55; the sequence is NTDEETNTEVQPQEEDQAVSVSFGNPEGSDLQ. Positions 25-40 are enriched in acidic residues; that stretch reads TDEETNTEVQPQEEDQ. 3 disulfides stabilise this stretch: cysteine 64/cysteine 92, cysteine 66/cysteine 81, and cysteine 71/cysteine 91.

This sequence belongs to the alpha-defensin family.

It is found in the secreted. May have microbicidal activities. The chain is Alpha-defensin 26 (Defa26) from Mus musculus (Mouse).